The chain runs to 320 residues: Cytochrome f (320 aa).

The first 35 residues, 1–35 (MQTRKTFSWIKEQINRSISVSLMIYIITRPSISIA), serve as a signal peptide directing secretion. Positions 36, 56, 59, and 60 each coordinate heme. Residues 286–306 (VQGLLFFLASVILAQIFLVLK) form a helical membrane-spanning segment.

It belongs to the cytochrome f family. In terms of assembly, the 4 large subunits of the cytochrome b6-f complex are cytochrome b6, subunit IV (17 kDa polypeptide, petD), cytochrome f and the Rieske protein, while the 4 small subunits are PetG, PetL, PetM and PetN. The complex functions as a dimer. Requires heme as cofactor.

Its subcellular location is the plastid. It localises to the chloroplast thylakoid membrane. Component of the cytochrome b6-f complex, which mediates electron transfer between photosystem II (PSII) and photosystem I (PSI), cyclic electron flow around PSI, and state transitions. The chain is Cytochrome f from Daucus carota (Wild carrot).